The following is a 1843-amino-acid chain: Zinc finger protein 142 (1843 aa).

2 C2H2-type zinc fingers span residues Tyr-103–His-127 and Leu-164–His-186. Residues Pro-294–Glu-357 are disordered. A compositionally biased stretch (acidic residues) spans Ser-318 to Ser-329. Positions Val-330–Asp-340 are enriched in basic and acidic residues. Residue Ser-354 is modified to Phosphoserine. A C2H2-type 3 zinc finger spans residues His-363–His-385. Residues Leu-391 to Glu-413 form a C2H2-type 4; degenerate zinc finger. 7 C2H2-type zinc fingers span residues Tyr-453–His-475, Phe-543–His-566, His-601–His-623, His-629–His-651, Tyr-657–His-679, Tyr-685–His-707, and Tyr-744–His-767. A Glycyl lysine isopeptide (Lys-Gly) (interchain with G-Cter in SUMO2) cross-link involves residue Lys-794. 2 disordered regions span residues Gln-819–Val-888 and Pro-1103–Ser-1177. Basic and acidic residues predominate over residues Pro-837–Ile-846. Positions Leu-1157 to Pro-1167 are enriched in pro residues. Residues Pro-1168–Ser-1177 show a composition bias toward polar residues. C2H2-type zinc fingers lie at residues Leu-1331–His-1354, Ile-1388–His-1411, Phe-1446–His-1469, Leu-1514–His-1537, Tyr-1608–His-1630, Tyr-1636–His-1658, Tyr-1664–His-1686, Tyr-1692–His-1715, and Phe-1721–His-1743. Glycyl lysine isopeptide (Lys-Gly) (interchain with G-Cter in SUMO2) cross-links involve residues Lys-1353 and Lys-1402. Lys-1747 participates in a covalent cross-link: Glycyl lysine isopeptide (Lys-Gly) (interchain with G-Cter in SUMO2). Residues Tyr-1749–His-1771 form a C2H2-type 21 zinc finger. The segment at His-1795–Gly-1843 is disordered. Residues Pro-1829 to Gly-1843 are compositionally biased toward pro residues.

It belongs to the krueppel C2H2-type zinc-finger protein family.

The protein localises to the nucleus. Its function is as follows. May be involved in transcriptional regulation. This is Zinc finger protein 142 from Mus musculus (Mouse).